An 853-amino-acid polypeptide reads, in one-letter code: DNA mismatch repair protein MutS (853 aa).

An ATP-binding site is contributed by 614–621 (GPNMGGKS).

This sequence belongs to the DNA mismatch repair MutS family.

Its function is as follows. This protein is involved in the repair of mismatches in DNA. It is possible that it carries out the mismatch recognition step. This protein has a weak ATPase activity. The chain is DNA mismatch repair protein MutS from Cronobacter sakazakii (strain ATCC BAA-894) (Enterobacter sakazakii).